The following is a 403-amino-acid chain: Leu/Ile/Val-binding protein homolog 8 (403 aa).

A signal peptide spans 1 to 26; the sequence is MRLSRLLIGASLGVALSSTAFTAALA.

The protein belongs to the leucine-binding protein family.

Component of an amino-acid transport system. This is Leu/Ile/Val-binding protein homolog 8 from Brucella suis biovar 1 (strain 1330).